The following is a 176-amino-acid chain: ATP-dependent protease subunit HslV (176 aa).

Thr2 is a catalytic residue. Na(+) contacts are provided by Gly157, Cys160, and Thr163.

Belongs to the peptidase T1B family. HslV subfamily. A double ring-shaped homohexamer of HslV is capped on each side by a ring-shaped HslU homohexamer. The assembly of the HslU/HslV complex is dependent on binding of ATP.

It localises to the cytoplasm. The enzyme catalyses ATP-dependent cleavage of peptide bonds with broad specificity.. Its activity is regulated as follows. Allosterically activated by HslU binding. Its function is as follows. Protease subunit of a proteasome-like degradation complex believed to be a general protein degrading machinery. The chain is ATP-dependent protease subunit HslV from Pseudomonas entomophila (strain L48).